Here is a 1131-residue protein sequence, read N- to C-terminus: DNA polymerase II large subunit (1131 aa).

Belongs to the archaeal DNA polymerase II family. As to quaternary structure, heterodimer of a large subunit and a small subunit.

The catalysed reaction is DNA(n) + a 2'-deoxyribonucleoside 5'-triphosphate = DNA(n+1) + diphosphate. The enzyme catalyses Exonucleolytic cleavage in the 3'- to 5'-direction to yield nucleoside 5'-phosphates.. Its function is as follows. Possesses two activities: a DNA synthesis (polymerase) and an exonucleolytic activity that degrades single-stranded DNA in the 3'- to 5'-direction. Has a template-primer preference which is characteristic of a replicative DNA polymerase. The polypeptide is DNA polymerase II large subunit (Methanococcus maripaludis (strain DSM 14266 / JCM 13030 / NBRC 101832 / S2 / LL)).